The following is a 389-amino-acid chain: Dual-specificity RNA methyltransferase RlmN (389 aa).

Glu110 acts as the Proton acceptor in catalysis. Positions 116 to 355 constitute a Radical SAM core domain; sequence EKDRATLCVS…TIVRKTRGDD (240 aa). Residues Cys123 and Cys360 are joined by a disulfide bond. [4Fe-4S] cluster is bound by residues Cys130, Cys134, and Cys137. S-adenosyl-L-methionine contacts are provided by residues 184 to 185, Ser216, 238 to 240, and Asn317; these read GE and SLH. The active-site S-methylcysteine intermediate is the Cys360.

Belongs to the radical SAM superfamily. RlmN family. The cofactor is [4Fe-4S] cluster.

It is found in the cytoplasm. It carries out the reaction adenosine(2503) in 23S rRNA + 2 reduced [2Fe-2S]-[ferredoxin] + 2 S-adenosyl-L-methionine = 2-methyladenosine(2503) in 23S rRNA + 5'-deoxyadenosine + L-methionine + 2 oxidized [2Fe-2S]-[ferredoxin] + S-adenosyl-L-homocysteine. The enzyme catalyses adenosine(37) in tRNA + 2 reduced [2Fe-2S]-[ferredoxin] + 2 S-adenosyl-L-methionine = 2-methyladenosine(37) in tRNA + 5'-deoxyadenosine + L-methionine + 2 oxidized [2Fe-2S]-[ferredoxin] + S-adenosyl-L-homocysteine. In terms of biological role, specifically methylates position 2 of adenine 2503 in 23S rRNA and position 2 of adenine 37 in tRNAs. m2A2503 modification seems to play a crucial role in the proofreading step occurring at the peptidyl transferase center and thus would serve to optimize ribosomal fidelity. The polypeptide is Dual-specificity RNA methyltransferase RlmN (Erwinia tasmaniensis (strain DSM 17950 / CFBP 7177 / CIP 109463 / NCPPB 4357 / Et1/99)).